The following is a 287-amino-acid chain: Ribosomal RNA small subunit methyltransferase A (287 aa).

Residues N18, L20, G45, E66, D91, and N118 each coordinate S-adenosyl-L-methionine.

It belongs to the class I-like SAM-binding methyltransferase superfamily. rRNA adenine N(6)-methyltransferase family. RsmA subfamily.

The protein resides in the cytoplasm. It catalyses the reaction adenosine(1518)/adenosine(1519) in 16S rRNA + 4 S-adenosyl-L-methionine = N(6)-dimethyladenosine(1518)/N(6)-dimethyladenosine(1519) in 16S rRNA + 4 S-adenosyl-L-homocysteine + 4 H(+). Functionally, specifically dimethylates two adjacent adenosines (A1518 and A1519) in the loop of a conserved hairpin near the 3'-end of 16S rRNA in the 30S particle. May play a critical role in biogenesis of 30S subunits. The sequence is that of Ribosomal RNA small subunit methyltransferase A from Haemophilus influenzae (strain PittEE).